The following is a 294-amino-acid chain: 2,4-diacetylphloroglucinol hydrolase (294 aa).

Zn(2+)-binding residues include H129, E160, H270, and E274.

This sequence belongs to the DAPG/phloretin hydrolase family. In terms of assembly, homodimer. Zn(2+) is required as a cofactor.

The catalysed reaction is 2,4-diacetylphloroglucinol + H2O = 2-acetylphloroglucinol + acetate. With respect to regulation, specifically and significantly activated by CoCl(2). Competitively inhibited by MAPG, but not by 2-hydroxy- and 4-hydroxyacetophenone. In terms of biological role, hydrolase that specifically degrades the potent antimicrobial compound 2,4-diacetylphloroglucinol (DAPG) to equimolar amounts of mildly toxic monoacetylphloroglucinol (MAPG) and acetate. The protein is 2,4-diacetylphloroglucinol hydrolase of Pseudomonas sp.